A 122-amino-acid polypeptide reads, in one-letter code: MVQQESRLRVADNTGAKEVLTIRVLGGTKRRYASVGDKIVVSIKDTAPNGSVKKGSVSTAVVVRTKKEVRRADGSYIRFDDNACVLLNAAGEMRGTRVFGPVARELREKQFMKIVSLAPEVL.

It belongs to the universal ribosomal protein uL14 family. As to quaternary structure, part of the 50S ribosomal subunit. Forms a cluster with proteins L3 and L19. In the 70S ribosome, L14 and L19 interact and together make contacts with the 16S rRNA in bridges B5 and B8.

In terms of biological role, binds to 23S rRNA. Forms part of two intersubunit bridges in the 70S ribosome. This chain is Large ribosomal subunit protein uL14, found in Flavobacterium psychrophilum (strain ATCC 49511 / DSM 21280 / CIP 103535 / JIP02/86).